The sequence spans 255 residues: Pyridoxine 5'-phosphate synthase (255 aa).

N12 lines the 3-amino-2-oxopropyl phosphate pocket. 14 to 15 (DH) serves as a coordination point for 1-deoxy-D-xylulose 5-phosphate. R23 contacts 3-amino-2-oxopropyl phosphate. H48 serves as the catalytic Proton acceptor. 1-deoxy-D-xylulose 5-phosphate-binding residues include R50 and H55. E75 serves as the catalytic Proton acceptor. T105 provides a ligand contact to 1-deoxy-D-xylulose 5-phosphate. Residue H199 is the Proton donor of the active site. Residues G200 and 221-222 (GF) each bind 3-amino-2-oxopropyl phosphate.

The protein belongs to the PNP synthase family. Homooctamer; tetramer of dimers.

It localises to the cytoplasm. It catalyses the reaction 3-amino-2-oxopropyl phosphate + 1-deoxy-D-xylulose 5-phosphate = pyridoxine 5'-phosphate + phosphate + 2 H2O + H(+). Its pathway is cofactor biosynthesis; pyridoxine 5'-phosphate biosynthesis; pyridoxine 5'-phosphate from D-erythrose 4-phosphate: step 5/5. Functionally, catalyzes the complicated ring closure reaction between the two acyclic compounds 1-deoxy-D-xylulose-5-phosphate (DXP) and 3-amino-2-oxopropyl phosphate (1-amino-acetone-3-phosphate or AAP) to form pyridoxine 5'-phosphate (PNP) and inorganic phosphate. This chain is Pyridoxine 5'-phosphate synthase, found in Rhodopseudomonas palustris (strain BisB18).